A 321-amino-acid polypeptide reads, in one-letter code: NADPH-dependent codeinone reductase 1-5 (321 aa).

Positions 27 and 51 each coordinate NADPH. Active-site proton donor residues include tyrosine 56 and histidine 119. A substrate-binding site is contributed by histidine 119. NADPH contacts are provided by glutamine 187, serine 214, leucine 216, serine 264, and arginine 269.

This sequence belongs to the aldo/keto reductase family. Latex secreting cells (laticifer cells). Expressed constitutively and ubiquitously with highest levels in capsules.

It is found in the cytoplasm. The protein localises to the cytosol. It catalyses the reaction codeine + NADP(+) = codeinone + NADPH + H(+). The enzyme catalyses neopine + NADP(+) = neopinone + NADPH + H(+). The catalysed reaction is morphine + NADP(+) = morphinone + NADPH + H(+). It carries out the reaction neomorphine + NADP(+) = neomorphinone + NADPH + H(+). It functions in the pathway alkaloid biosynthesis; morphine biosynthesis. Its function is as follows. NADPH-dependent codeinone reductase involved in biosynthesis of morphinan-type benzylisoquinoline and opiate alkaloids natural products. Reduces codeinone to codeine in the penultimate step in morphine biosynthesis. Can use morphinone, hydrocodone and hydromorphone as substrate during reductive reaction with NADPH as cofactor, and morphine and dihydrocodeine as substrate during oxidative reaction with NADP as cofactor. Converts morphinone to morphine, and neomorphinone to neomorphine. Reduces irreversibly neopinone, a spontaneous isomer of codeinone, to neopine; in planta, neopine levels are limited to low levels. In Papaver somniferum (Opium poppy), this protein is NADPH-dependent codeinone reductase 1-5.